The sequence spans 260 residues: Flavin-dependent thymidylate synthase (260 aa).

A ThyX domain is found at 1 to 202; that stretch reads MKIKLVSYSK…PRLFKYAGPN (202 aa). Residues Ser55, 79–81, and Gln87 contribute to the FAD site; that span reads RHR. Residues 76–79, 87–91, and Arg141 contribute to the dUMP site; these read QLVR and QMSHR. The ThyX motif signature appears at 79–89; it reads RHRIASYTQMS. Residues 157–159 and Asn163 contribute to the FAD site; that span reads NAR. Arg168 contacts dUMP. Residue Arg168 is the Involved in ionization of N3 of dUMP, leading to its activation of the active site.

It belongs to the thymidylate synthase ThyX family. As to quaternary structure, homotetramer. The cofactor is FAD.

It catalyses the reaction dUMP + (6R)-5,10-methylene-5,6,7,8-tetrahydrofolate + NADPH + H(+) = dTMP + (6S)-5,6,7,8-tetrahydrofolate + NADP(+). It participates in pyrimidine metabolism; dTTP biosynthesis. Its function is as follows. Catalyzes the reductive methylation of 2'-deoxyuridine-5'-monophosphate (dUMP) to 2'-deoxythymidine-5'-monophosphate (dTMP) while utilizing 5,10-methylenetetrahydrofolate (mTHF) as the methyl donor, and NADPH and FADH(2) as the reductant. This chain is Flavin-dependent thymidylate synthase, found in Sulfolobus acidocaldarius (strain ATCC 33909 / DSM 639 / JCM 8929 / NBRC 15157 / NCIMB 11770).